A 525-amino-acid polypeptide reads, in one-letter code: Protein nucleotidyltransferase YdiU (525 aa).

Residues Gly-107, Gly-109, Arg-110, Lys-129, Asp-141, Gly-142, Arg-192, and Arg-199 each coordinate ATP. Asp-268 acts as the Proton acceptor in catalysis. The Mg(2+) site is built by Asn-269 and Asp-278. Position 278 (Asp-278) interacts with ATP.

This sequence belongs to the SELO family. It depends on Mg(2+) as a cofactor. The cofactor is Mn(2+).

The catalysed reaction is L-seryl-[protein] + ATP = 3-O-(5'-adenylyl)-L-seryl-[protein] + diphosphate. It carries out the reaction L-threonyl-[protein] + ATP = 3-O-(5'-adenylyl)-L-threonyl-[protein] + diphosphate. It catalyses the reaction L-tyrosyl-[protein] + ATP = O-(5'-adenylyl)-L-tyrosyl-[protein] + diphosphate. The enzyme catalyses L-histidyl-[protein] + UTP = N(tele)-(5'-uridylyl)-L-histidyl-[protein] + diphosphate. The catalysed reaction is L-seryl-[protein] + UTP = O-(5'-uridylyl)-L-seryl-[protein] + diphosphate. It carries out the reaction L-tyrosyl-[protein] + UTP = O-(5'-uridylyl)-L-tyrosyl-[protein] + diphosphate. Nucleotidyltransferase involved in the post-translational modification of proteins. It can catalyze the addition of adenosine monophosphate (AMP) or uridine monophosphate (UMP) to a protein, resulting in modifications known as AMPylation and UMPylation. The protein is Protein nucleotidyltransferase YdiU of Ralstonia nicotianae (strain ATCC BAA-1114 / GMI1000) (Ralstonia solanacearum).